Reading from the N-terminus, the 389-residue chain is Heat-inducible transcription repressor HrcA (389 aa).

Belongs to the HrcA family.

Its function is as follows. Negative regulator of class I heat shock genes (grpE-dnaK-dnaJ and groELS operons). Prevents heat-shock induction of these operons. The chain is Heat-inducible transcription repressor HrcA from Synechococcus sp. (strain JA-2-3B'a(2-13)) (Cyanobacteria bacterium Yellowstone B-Prime).